A 343-amino-acid chain; its full sequence is L-threonine 3-dehydrogenase (343 aa).

Cys-38 contributes to the Zn(2+) binding site. Residues Thr-40 and His-43 each act as charge relay system in the active site. Zn(2+) is bound by residues His-63, Glu-64, Cys-93, Cys-96, Cys-99, and Cys-107. Residues Ile-176, Asp-196, Arg-201, 261–263 (LGI), and 286–288 (IAG) each bind NAD(+).

Belongs to the zinc-containing alcohol dehydrogenase family. Homotetramer. It depends on Zn(2+) as a cofactor.

The protein resides in the cytoplasm. The enzyme catalyses L-threonine + NAD(+) = (2S)-2-amino-3-oxobutanoate + NADH + H(+). The protein operates within amino-acid degradation; L-threonine degradation via oxydo-reductase pathway; glycine from L-threonine: step 1/2. Catalyzes the NAD(+)-dependent oxidation of L-threonine to 2-amino-3-ketobutyrate. The polypeptide is L-threonine 3-dehydrogenase (Thermus thermophilus (strain ATCC 27634 / DSM 579 / HB8)).